The chain runs to 367 residues: D-alanine--D-alanine ligase (367 aa).

Residues 145–351 (KRLLRDAGLP…QPALMDELVA (207 aa)) form the ATP-grasp domain. 174 to 229 (RAVGSSELFVKPANLGSSVGISKTRDAAEFEAACQLALRFDRKILIERCIAPVREI) contributes to the ATP binding site. The Mg(2+) site is built by aspartate 306, glutamate 318, and asparagine 320.

Belongs to the D-alanine--D-alanine ligase family. The cofactor is Mg(2+). Mn(2+) is required as a cofactor.

The protein localises to the cytoplasm. The enzyme catalyses 2 D-alanine + ATP = D-alanyl-D-alanine + ADP + phosphate + H(+). Its pathway is cell wall biogenesis; peptidoglycan biosynthesis. In terms of biological role, cell wall formation. In Bradyrhizobium sp. (strain ORS 278), this protein is D-alanine--D-alanine ligase.